The following is a 445-amino-acid chain: Phosphoglucosamine mutase (445 aa).

The Phosphoserine intermediate role is filled by S102. 4 residues coordinate Mg(2+): S102, D241, D243, and D245. S102 bears the Phosphoserine mark.

Belongs to the phosphohexose mutase family. It depends on Mg(2+) as a cofactor. Activated by phosphorylation.

It catalyses the reaction alpha-D-glucosamine 1-phosphate = D-glucosamine 6-phosphate. Catalyzes the conversion of glucosamine-6-phosphate to glucosamine-1-phosphate. The polypeptide is Phosphoglucosamine mutase (Sodalis glossinidius (strain morsitans)).